The following is a 979-amino-acid chain: Ubiquitin carboxyl-terminal hydrolase 37 (979 aa).

Positions 32-34 (KDN) match the KEN box 1 motif. 2 consecutive short sequence motifs (D-box) follow at residues 71 to 79 (RLMLTLQDN) and 96 to 105 (RLFLDAVHQN). Residue Ser-114 is modified to Phosphoserine. Disordered stretches follow at residues 116 to 178 (GSGS…TGGG) and 192 to 240 (STPL…SRKY). The segment covering 135–148 (RQLSYSDNQASSKR) has biased composition (polar residues). The segment covering 149 to 159 (GSLETKDEIPF) has biased composition (basic and acidic residues). The short motif at 160–168 (RKVLGSPGR) is the D-box 3 element. Ser-212 carries the phosphoserine modification. Positions 222–224 (KEN) match the KEN box 2 motif. The 611-residue stretch at 341–951 (QGFSNLGNTC…SGYIFFYMHK (611 aa)) folds into the USP domain. Catalysis depends on Cys-350, which acts as the Nucleophile. Phosphoserine; by CDK2 is present on Ser-628. A phosphoserine mark is found at Ser-650 and Ser-652. Residues 704–723 (SEEEVLAAVLEISRREASPV) enclose the UIM 1 domain. The interval 719 to 795 (EASPVLSPED…TPEGSQGEVD (77 aa)) is disordered. At Ser-770 the chain carries Phosphoserine. Positions 774–786 (ITKDCDENKENKT) are enriched in basic and acidic residues. The KEN box 3 motif lies at 782–784 (KEN). 2 UIM domains span residues 806-825 (REEQELQQALAQSLQEQEAW) and 828-847 (KEDDDLKRATELSLQEFNNS). Catalysis depends on His-906, which acts as the Proton acceptor.

The protein belongs to the peptidase C19 family. Interacts with FZR1/CDH1. Interacts with CDT1. Polyubiquitinated via 'Lys-11'-linked ubiquitin by the APC(CDH1) complex during late mitosis, leading to its degradation. Able to mediate auto-deubiquitination. Post-translationally, phosphorylated at Ser-628 by CDK2 during G1/S phase but not during mitosis; phosphorylation at Ser-628 is required for deubiquitinase activity. Also polyubiquitinated during early G1 phase, without leading to degradation. Phosphorylated at Ser-114 by ATM following DNA damage, which in turn increases its deubiquitination activity towards BLM.

It localises to the nucleus. It is found in the chromosome. The catalysed reaction is Thiol-dependent hydrolysis of ester, thioester, amide, peptide and isopeptide bonds formed by the C-terminal Gly of ubiquitin (a 76-residue protein attached to proteins as an intracellular targeting signal).. Its function is as follows. Deubiquitinase that plays a role in different processes including cell cycle regulation, DNA replication or DNA damage response. Antagonizes the anaphase-promoting complex (APC/C) during G1/S transition by mediating deubiquitination of cyclin-A (CCNA1 and CCNA2), thereby promoting S phase entry. Specifically mediates deubiquitination of 'Lys-11'-linked polyubiquitin chains, a specific ubiquitin-linkage type mediated by the APC/C complex. Phosphorylation at Ser-628 during G1/S phase maximizes the deubiquitinase activity, leading to prevent degradation of cyclin-A (CCNA1 and CCNA2). Plays an important role in the regulation of DNA replication by stabilizing the licensing factor CDT1. Also plays an essential role beyond S-phase entry to promote the efficiency and fidelity of replication by deubiquitinating checkpoint kinase 1/CHK1, promoting its stability. Sustains the DNA damage response (DDR) by deubiquitinating and stabilizing the ATP-dependent DNA helicase BLM. Mechanistically, DNA double-strand breaks (DSB) promotes ATM-mediated phosphorylation of USP37 and enhances the binding between USP37 and BLM. Promotes cell migration by deubiquitinating and stabilizing the epithelial-mesenchymal transition (EMT)-inducing transcription factor SNAI. Plays a role in the regulation of mitotic spindle assembly and mitotic progression by associating with chromatin-associated WAPL and stabilizing it through deubiquitination. This chain is Ubiquitin carboxyl-terminal hydrolase 37, found in Mus musculus (Mouse).